Reading from the N-terminus, the 346-residue chain is MQVYYDRDADQDLIKGKKVAVVGYGSQGHAHAQNMRDSGVKEVAIALRPGSPTAKKAEAAGFKVMSNKEAAAWADVIMIAAPDEHQAKIYAEDIGPNMKPGAALAFAHGLNIHFGLIEARPDIDVFMVAPKGPGHTVRSEYQKGGGVPCLIAVAQEAQGSAAAGNGYAKALALSYASAVGGGRSGIIETTFKEECETDLFGEQAVLCGGITHLIQAGFETLVEAGYAPEMAYFECLHETKLIVDLLYEGGIANMRYSISNTAEYGDIKTGPRIITEETKKEMKRVLADIQSGRFVKDFVLDNQAGQPELKASRKAAAAHPIEQTGEKLRAMMPWIAKNKLVDKAKN.

In terms of domain architecture, KARI N-terminal Rossmann spans 1–189 (MQVYYDRDAD…GGGRSGIIET (189 aa)). Residues 24 to 27 (YGSQ), Arg48, Ser51, Thr53, and 83 to 86 (DEHQ) contribute to the NADP(+) site. His108 is an active-site residue. Gly134 is an NADP(+) binding site. The KARI C-terminal knotted domain maps to 190-335 (TFKEECETDL…EKLRAMMPWI (146 aa)). The Mg(2+) site is built by Asp198, Glu202, Glu234, and Glu238. Ser259 serves as a coordination point for substrate.

This sequence belongs to the ketol-acid reductoisomerase family. It depends on Mg(2+) as a cofactor.

The catalysed reaction is (2R)-2,3-dihydroxy-3-methylbutanoate + NADP(+) = (2S)-2-acetolactate + NADPH + H(+). It carries out the reaction (2R,3R)-2,3-dihydroxy-3-methylpentanoate + NADP(+) = (S)-2-ethyl-2-hydroxy-3-oxobutanoate + NADPH + H(+). It functions in the pathway amino-acid biosynthesis; L-isoleucine biosynthesis; L-isoleucine from 2-oxobutanoate: step 2/4. The protein operates within amino-acid biosynthesis; L-valine biosynthesis; L-valine from pyruvate: step 2/4. Functionally, involved in the biosynthesis of branched-chain amino acids (BCAA). Catalyzes an alkyl-migration followed by a ketol-acid reduction of (S)-2-acetolactate (S2AL) to yield (R)-2,3-dihydroxy-isovalerate. In the isomerase reaction, S2AL is rearranged via a Mg-dependent methyl migration to produce 3-hydroxy-3-methyl-2-ketobutyrate (HMKB). In the reductase reaction, this 2-ketoacid undergoes a metal-dependent reduction by NADPH to yield (R)-2,3-dihydroxy-isovalerate. In Sphingopyxis alaskensis (strain DSM 13593 / LMG 18877 / RB2256) (Sphingomonas alaskensis), this protein is Ketol-acid reductoisomerase (NADP(+)).